We begin with the raw amino-acid sequence, 269 residues long: Hydroxyethylthiazole kinase (269 aa).

Methionine 45 provides a ligand contact to substrate. Residues arginine 121 and threonine 167 each coordinate ATP. Residue glycine 194 coordinates substrate.

This sequence belongs to the Thz kinase family. Mg(2+) serves as cofactor.

The enzyme catalyses 5-(2-hydroxyethyl)-4-methylthiazole + ATP = 4-methyl-5-(2-phosphooxyethyl)-thiazole + ADP + H(+). It participates in cofactor biosynthesis; thiamine diphosphate biosynthesis; 4-methyl-5-(2-phosphoethyl)-thiazole from 5-(2-hydroxyethyl)-4-methylthiazole: step 1/1. Functionally, catalyzes the phosphorylation of the hydroxyl group of 4-methyl-5-beta-hydroxyethylthiazole (THZ). The sequence is that of Hydroxyethylthiazole kinase from Brevibacillus brevis (strain 47 / JCM 6285 / NBRC 100599).